Consider the following 188-residue polypeptide: Probable nicotinate-nucleotide adenylyltransferase (188 aa).

Belongs to the NadD family.

It catalyses the reaction nicotinate beta-D-ribonucleotide + ATP + H(+) = deamido-NAD(+) + diphosphate. Its pathway is cofactor biosynthesis; NAD(+) biosynthesis; deamido-NAD(+) from nicotinate D-ribonucleotide: step 1/1. Its function is as follows. Catalyzes the reversible adenylation of nicotinate mononucleotide (NaMN) to nicotinic acid adenine dinucleotide (NaAD). The sequence is that of Probable nicotinate-nucleotide adenylyltransferase from Listeria monocytogenes serotype 4b (strain F2365).